Here is a 94-residue protein sequence, read N- to C-terminus: Cystatin-A1 (94 aa).

The short motif at 45 to 49 (QLVAG) is the Secondary area of contact element.

Belongs to the cystatin family.

It localises to the cytoplasm. Intracellular thiol proteinase inhibitor. Inhibits papain, but not cathepsin B. This Dictyostelium discoideum (Social amoeba) protein is Cystatin-A1 (cpiA).